We begin with the raw amino-acid sequence, 385 residues long: MYVRHFGLRDFRSWDHVDLELNPGRTVFFGPNGNGKTNLIEALWYSTTLSSHRVGTDIPLIRAGTIRAIVSTIVVNEGRECAIDLEIAAGRANRARLNRSLVRGMREVVGVLRAVLFAPEDLALVCGDPANRRRYLDDLATVRQPVIAAVRADYDKVLRQRTALLKSLAAARYRSDQGVLDTLDVWDTRLAEHGAELMAARIDLVNQLAPEVEKAYQLLAPGSRTASISYRASLDIGGIAGVGSSDRALLQADLLAGLSTRRNVELERGICLVGPHRDELELRLGDQPAKGFASHGESWSLAIALRLAAYELLRADGNEPVLLLDDVFAELDAARCRALATVAESAEQVLVTSAAQEDIPVGWDAKWVTVDLRDSDSGRVSVVYP.

Gly30–Thr37 is a binding site for ATP.

This sequence belongs to the RecF family.

Its subcellular location is the cytoplasm. Functionally, the RecF protein is involved in DNA metabolism; it is required for DNA replication and normal SOS inducibility. RecF binds preferentially to single-stranded, linear DNA. It also seems to bind ATP. The chain is DNA replication and repair protein RecF from Mycobacterium leprae (strain Br4923).